A 148-amino-acid polypeptide reads, in one-letter code: Large ribosomal subunit protein bL9 (148 aa).

Belongs to the bacterial ribosomal protein bL9 family.

Functionally, binds to the 23S rRNA. The polypeptide is Large ribosomal subunit protein bL9 (Pseudomonas savastanoi pv. phaseolicola (strain 1448A / Race 6) (Pseudomonas syringae pv. phaseolicola (strain 1448A / Race 6))).